The primary structure comprises 81 residues: Penaeidin-3j (81 aa).

The N-terminal stretch at M1–G19 is a signal peptide. At Q20 the chain carries Pyrrolidone carboxylic acid. Disulfide bonds link C50/C65, C54/C72, and C66/C73. Serine amide is present on S80.

This sequence belongs to the penaeidin family.

The protein resides in the cytoplasmic granule. Antibacterial and antifungal activity. Presents chitin-binding activity. This is Penaeidin-3j from Penaeus vannamei (Whiteleg shrimp).